The chain runs to 303 residues: Recombination-associated protein RdgC (303 aa).

It belongs to the RdgC family.

The protein resides in the cytoplasm. The protein localises to the nucleoid. In terms of biological role, may be involved in recombination. This is Recombination-associated protein RdgC from Shewanella sediminis (strain HAW-EB3).